Here is a 418-residue protein sequence, read N- to C-terminus: L-glutamine:2-deoxy-scyllo-inosose aminotransferase (418 aa).

Lys192 is subject to N6-(pyridoxal phosphate)lysine.

It belongs to the DegT/DnrJ/EryC1 family. L-glutamine:2-deoxy-scyllo-inosose/scyllo-inosose aminotransferase subfamily. Pyridoxal 5'-phosphate serves as cofactor.

The enzyme catalyses 2-deoxy-L-scyllo-inosose + L-glutamine = 2-deoxy-scyllo-inosamine + 2-oxoglutaramate. The catalysed reaction is 3-amino-2,3-dideoxy-scyllo-inosose + L-glutamine = 2-deoxystreptamine + 2-oxoglutaramate. Its pathway is metabolic intermediate biosynthesis; 2-deoxystreptamine biosynthesis; 2-deoxystreptamine from D-glucose 6-phosphate: step 2/4. It participates in metabolic intermediate biosynthesis; 2-deoxystreptamine biosynthesis; 2-deoxystreptamine from D-glucose 6-phosphate: step 4/4. The protein operates within antibiotic biosynthesis; butirosin biosynthesis. Its function is as follows. Catalyzes the PLP-dependent transamination of 2-deoxy-scyllo-inosose (2-DOI) to form 2-deoxy-scyllo-inosamine (2-DOIA) using L-glutamine as the amino donor. Also catalyzes the transamination of 3-amino-2,3-dideoxy-scyllo-inosose (keto-2-DOIA) into 2-deoxystreptamine (2-DOS). The polypeptide is L-glutamine:2-deoxy-scyllo-inosose aminotransferase (btrR) (Niallia circulans (Bacillus circulans)).